A 262-amino-acid polypeptide reads, in one-letter code: Phosphonates import ATP-binding protein PhnC (262 aa).

The region spanning 5–253 (IRVEKLAKTF…RFDHLYRSIN (249 aa)) is the ABC transporter domain. 37-44 (GPSGSGKS) is a binding site for ATP.

Belongs to the ABC transporter superfamily. Phosphonates importer (TC 3.A.1.9.1) family. As to quaternary structure, the complex is composed of two ATP-binding proteins (PhnC), two transmembrane proteins (PhnE) and a solute-binding protein (PhnD).

The protein resides in the cell inner membrane. The enzyme catalyses phosphonate(out) + ATP + H2O = phosphonate(in) + ADP + phosphate + H(+). Its function is as follows. Part of the ABC transporter complex PhnCDE involved in phosphonates import. Responsible for energy coupling to the transport system. The polypeptide is Phosphonates import ATP-binding protein PhnC (Shigella dysenteriae serotype 1 (strain Sd197)).